The sequence spans 57 residues: RPYACELIVAAGPCMFFISAFYYSKGANKCYPFTYSGCRGNANRFKTIEECRRTCVV.

In terms of domain architecture, BPTI/Kunitz inhibitor spans 5–55 (CELIVAAGPCMFFISAFYYSKGANKCYPFTYSGCRGNANRFKTIEECRRTC). Intrachain disulfides connect Cys-5-Cys-55, Cys-14-Cys-38, and Cys-30-Cys-51.

This sequence belongs to the venom Kunitz-type family. As to expression, expressed by the venom gland.

The protein localises to the secreted. Its function is as follows. The mixture of mambaquaretin-7 and mambaquaretin-8 interacts with vasopressin V2 receptor (V2R/AVPR2), probably in a selective manner. This mixture inhibits vasopressin binding human V2R in the nanomolar range (Ki=3.14 nM), and also potently inhibits vasopressin-induced cAMP production (IC(50)=58 nM). In vivo, intraperitoneal injection of this protein into rats increases diuresis, without any loss of electrolytes. The sequence is that of Mambaquaretin-7 from Dendroaspis polylepis polylepis (Black mamba).